Here is a 270-residue protein sequence, read N- to C-terminus: Secreted RxLR effector protein 149 (270 aa).

An N-terminal signal peptide occupies residues 1-21 (MRNGVVLFGLFFIGYSSCVLA). A RxLR-dEER motif is present at residues 43–58 (RTLQADDPERILAEER).

It belongs to the RxLR effector family.

The protein resides in the secreted. It localises to the host nucleus. Its subcellular location is the host cytoplasm. Functionally, secreted effector that completely suppresses the host cell death induced by cell death-inducing proteins. This is Secreted RxLR effector protein 149 from Plasmopara viticola (Downy mildew of grapevine).